The chain runs to 895 residues: Receptor-like protein kinase FERONIA (895 aa).

The first 27 residues, 1–27, serve as a signal peptide directing secretion; sequence MKITEGRFRLSLLLLLLLISAATLISA. The Extracellular segment spans residues 28-447; that stretch reads ADYSPTEKIL…TTRKSKSNTA (420 aa). N-linked (GlcNAc...) asparagine glycosylation is found at asparagine 46, asparagine 124, asparagine 142, asparagine 171, asparagine 219, asparagine 269, asparagine 305, asparagine 330, asparagine 345, and asparagine 410. Residues 448 to 468 traverse the membrane as a helical segment; the sequence is IIAGAASGAVVLALIIGFCVF. At 469 to 895 the chain is on the cytoplasmic side; sequence GAYRRRKRGD…FSQIMNPKGR (427 aa). A Protein kinase domain is found at 536-810; it reads FDESRVLGVG…GDVLWNLEFA (275 aa). Residues 542–550 and lysine 565 each bind ATP; that span reads LGVGGFGKV. Aspartate 661 (proton acceptor) is an active-site residue. Positions 844–895 are disordered; sequence NDKSSDVYEGNVTDSRSSGIDMSIGGRSLASEDSDGLTPSAVFSQIMNPKGR. Residues serine 858, serine 866, serine 871, and serine 874 each carry the phosphoserine modification. Over residues 884-895 the composition is skewed to polar residues; it reads AVFSQIMNPKGR.

Belongs to the protein kinase superfamily. Ser/Thr protein kinase family. Interacts with ROPGEF1. Interacts with RALF1; triggering phosphorylation status and subsequent activation. Interacts with LRE and LLG1. Interacts, via its extracellular domain, with FERONIA at the synergid cell surface. In terms of processing, autophosphorylated. Phosphorylated at Ser-858, Ser-871 and Ser-874 upon activation by RALF1. Expressed in leaves, buds, flowers, siliques, young ovules primordia, and young anthers with immature pollen, but not detected in mature pollen. Highest expression in the synergid cells of the female gametophyte.

The protein resides in the cell membrane. The enzyme catalyses L-seryl-[protein] + ATP = O-phospho-L-seryl-[protein] + ADP + H(+). The catalysed reaction is L-threonyl-[protein] + ATP = O-phospho-L-threonyl-[protein] + ADP + H(+). Functionally, receptor-like protein kinase that mediates the female control of male gamete delivery during fertilization, including growth cessation of compatible pollen tubes ensuring a reproductive isolation barriers, by regulating MLO7 subcellular polarization upon pollen tube perception in the female gametophyte synergids. Required for cell elongation during vegetative growth, mostly in a brassinosteroids- (BR-) independent manner. Acts as an upstream regulator for the Rac/Rop-signaling pathway that controls ROS-mediated root hair development. Seems to regulate a cross-talk between brassinosteroids and ethylene signaling pathways during hypocotyl elongation. Negative regulator of brassinosteroid response in light-grown hypocotyls, but required for brassinosteroid response in etiolated seedlings. Mediates sensitivity to powdery mildew (e.g. Golovinomyces orontii). Positive regulator of auxin-promoted growth that represses the abscisic acid (ABA) signaling via the activation of ABI2 phosphatase. Required for RALF1-mediated extracellular alkalinization in a signaling pathway preventing cell expansion. The sequence is that of Receptor-like protein kinase FERONIA from Arabidopsis thaliana (Mouse-ear cress).